The following is a 196-amino-acid chain: MAASAWCCLRCCRDGGTGHIPLKEMPAVQLDTQHMGTDVVIVKNGRRICGTGGCLASAPLHQNKSYFEFKIQSTGIWGIGVATQKVNLNQIPLGRDMHSLVMRNDGALYHNNEEKNRLPANSLPQEGDVVGITYDHVELNVYLNGKNMHCPASGIRGTVYPVVYVDDSAILDCQFSEFYHTPPPGFEKILFEQQIF.

A2 carries the post-translational modification N-acetylalanine. In terms of domain architecture, B30.2/SPRY spans 2–184; sequence AASAWCCLRC…FSEFYHTPPP (183 aa).

This chain is SPRY domain-containing protein 7 (Spryd7), found in Mus musculus (Mouse).